Here is a 152-residue protein sequence, read N- to C-terminus: UPF0266 membrane protein KPN78578_23010 (152 aa).

The next 3 helical transmembrane spans lie at L6 to M26, V45 to H65, and T67 to I87.

This sequence belongs to the UPF0266 family.

The protein localises to the cell inner membrane. This Klebsiella pneumoniae subsp. pneumoniae (strain ATCC 700721 / MGH 78578) protein is UPF0266 membrane protein KPN78578_23010.